The following is a 611-amino-acid chain: Dihydroxy-acid dehydratase (611 aa).

Position 81 (Asp-81) interacts with Mg(2+). Residue Cys-122 participates in [2Fe-2S] cluster binding. Residues Asp-123 and Lys-124 each coordinate Mg(2+). The residue at position 124 (Lys-124) is an N6-carboxylysine. Cys-195 contacts [2Fe-2S] cluster. Glu-491 provides a ligand contact to Mg(2+). The Proton acceptor role is filled by Ser-517.

This sequence belongs to the IlvD/Edd family. As to quaternary structure, homodimer. [2Fe-2S] cluster serves as cofactor. Mg(2+) is required as a cofactor.

It carries out the reaction (2R)-2,3-dihydroxy-3-methylbutanoate = 3-methyl-2-oxobutanoate + H2O. The enzyme catalyses (2R,3R)-2,3-dihydroxy-3-methylpentanoate = (S)-3-methyl-2-oxopentanoate + H2O. It functions in the pathway amino-acid biosynthesis; L-isoleucine biosynthesis; L-isoleucine from 2-oxobutanoate: step 3/4. Its pathway is amino-acid biosynthesis; L-valine biosynthesis; L-valine from pyruvate: step 3/4. In terms of biological role, functions in the biosynthesis of branched-chain amino acids. Catalyzes the dehydration of (2R,3R)-2,3-dihydroxy-3-methylpentanoate (2,3-dihydroxy-3-methylvalerate) into 2-oxo-3-methylpentanoate (2-oxo-3-methylvalerate) and of (2R)-2,3-dihydroxy-3-methylbutanoate (2,3-dihydroxyisovalerate) into 2-oxo-3-methylbutanoate (2-oxoisovalerate), the penultimate precursor to L-isoleucine and L-valine, respectively. This chain is Dihydroxy-acid dehydratase, found in Actinobacillus pleuropneumoniae serotype 5b (strain L20).